The following is a 319-amino-acid chain: MIACHVIAIVSAFILDKWLGDPKWLPHPVVGMGKLITYFERRWNCGRWRREKGVLLLLTVLLIVTALSLALVWLSYQVHLLLGVIVEALLIASTIAAKGLKEAAEEVARPLATRNLLEARRKLSYIVGRDTDQLDEKEIARGAIETVAENTSDGVTAPLFYALIGGAPLALLYRATNTCDSMVGYKNERYRDFGWASAKFDDVLNWVPSRITGVLMLLLHRKRRQAPLGQSLKMLAREAKKHPSPNSGWGEAAMALLLHVTLGGTNTYQGMTSERAKMGYGTKAMTAKDIDESIAIMNRTVLGFLVFLFLLGGFIYAIT.

3 consecutive transmembrane segments (helical) span residues 54–76, 154–173, and 301–318; these read VLLLLTVLLIVTALSLALVWLSY, GVTAPLFYALIGGAPLALLY, and VLGFLVFLFLLGGFIYAI.

This sequence belongs to the CobD/CbiB family.

It localises to the cell membrane. It functions in the pathway cofactor biosynthesis; adenosylcobalamin biosynthesis. Its function is as follows. Converts cobyric acid to cobinamide by the addition of aminopropanol on the F carboxylic group. The polypeptide is Cobalamin biosynthesis protein CobD (Halalkalibacterium halodurans (strain ATCC BAA-125 / DSM 18197 / FERM 7344 / JCM 9153 / C-125) (Bacillus halodurans)).